The sequence spans 71 residues: Cruzioseptin-2 (71 aa).

The signal sequence occupies residues 1 to 22; sequence MAFLKKSLFLVLFLGLVSLSIC. A propeptide spanning residues 23–43 is cleaved from the precursor; sequence EEEKREEENEEVQEDDDQSEE. Residue glutamine 68 is modified to Glutamine amide. Residues 70 to 71 constitute a propeptide that is removed on maturation; sequence EQ.

In terms of tissue distribution, expressed by the skin glands.

The protein localises to the secreted. Functionally, has antimicrobial activity against Gram-negative bacterium E.coli (MIC=26.35 uM), against Gram-positive bacterium S.aureus (MIC=6.59 uM) and against fungus C.albicans (MIC=13.18 uM). At higher concentrations also has a bactericidal and fungicidal effect. Has hemagglutinating activity against horse erythrocytes. In Cruziohyla calcarifer (Splendid leaf frog), this protein is Cruzioseptin-2.